We begin with the raw amino-acid sequence, 352 residues long: MTKLRVGLLFGGRSGEHEVSINSAKAIATALSASENATKYDILPVYIRKDGCWQAPDVAQQVLESAQPLSTPTDKSPQLWQFPPQVNQVDVWFPILHGPNGEDGTLQGLLTLMQVPYVGSGVLGSAVGMDKITMKTVFAKAGLPQVKYMTLSRGQIWSNPCIFPKLCDEIEETLNYPCFVKPANLGSSVGIAKVRSRSELEKALDQAASYDRRIIVEAGVIAREVECAVLGNDNPKASVVGEITFNSDFYDYETKYTDGRAQLLIPASVPDSIMTQIQEMSLAAFAAVDAAGLARVDFFYVEKTGEILINEINTLPGFTAFSMYPQLWAATGISFPQLVDRLIELALERHQR.

An ATP-grasp domain is found at 135–344 (KTVFAKAGLP…FPQLVDRLIE (210 aa)). 171-226 (EETLNYPCFVKPANLGSSVGIAKVRSRSELEKALDQAASYDRRIIVEAGVIAREVE) is an ATP binding site. Aspartate 297, glutamate 311, and asparagine 313 together coordinate Mg(2+).

It belongs to the D-alanine--D-alanine ligase family. Requires Mg(2+) as cofactor. Mn(2+) serves as cofactor.

The protein resides in the cytoplasm. The catalysed reaction is 2 D-alanine + ATP = D-alanyl-D-alanine + ADP + phosphate + H(+). The protein operates within cell wall biogenesis; peptidoglycan biosynthesis. Cell wall formation. This Gloeothece citriformis (strain PCC 7424) (Cyanothece sp. (strain PCC 7424)) protein is D-alanine--D-alanine ligase.